The chain runs to 292 residues: Coatomer subunit epsilon-1 (292 aa).

The protein belongs to the COPE family. In terms of assembly, oligomeric complex that consists of at least the alpha, beta, beta', gamma, delta, epsilon and zeta subunits.

The protein localises to the cytoplasm. It localises to the golgi apparatus membrane. The protein resides in the cytoplasmic vesicle. It is found in the COPI-coated vesicle membrane. In terms of biological role, the coatomer is a cytosolic protein complex that binds to dilysine motifs and reversibly associates with Golgi non-clathrin-coated vesicles, which further mediate biosynthetic protein transport from the ER, via the Golgi up to the trans Golgi network. The coatomer complex is required for budding from Golgi membranes, and is essential for the retrograde Golgi-to-ER transport of dilysine-tagged proteins. This is Coatomer subunit epsilon-1 from Arabidopsis thaliana (Mouse-ear cress).